The sequence spans 165 residues: Large ribosomal subunit protein uL11 (165 aa).

The residue at position 38 (Ser38) is a Phosphoserine. A Glycyl lysine isopeptide (Lys-Gly) (interchain with G-Cter in SUMO2) cross-link involves residue Lys40. Lys48 is covalently cross-linked (Glycyl lysine isopeptide (Lys-Gly) (interchain with G-Cter in ubiquitin)). Lys54 carries the post-translational modification N6-acetyllysine. Lys83 participates in a covalent cross-link: Glycyl lysine isopeptide (Lys-Gly) (interchain with G-Cter in ubiquitin). Ser165 carries the phosphoserine modification.

Belongs to the universal ribosomal protein uL11 family. In terms of assembly, component of the large ribosomal subunit. Mature ribosomes consist of a small (40S) and a large (60S) subunit. The 40S subunit contains about 33 different proteins and 1 molecule of RNA (18S). The 60S subunit contains about 49 different proteins and 3 molecules of RNA (28S, 5.8S and 5S). Ubiquitinated at Lys-48 and Lys-83 by RNF14 and RNF25 in response to ribosome collisions (ribosome stalling).

The protein localises to the cytoplasm. Its function is as follows. Component of the large ribosomal subunit. The ribosome is a large ribonucleoprotein complex responsible for the synthesis of proteins in the cell. Binds directly to 26S ribosomal RNA. This is Large ribosomal subunit protein uL11 (Rpl12) from Mus musculus (Mouse).